The sequence spans 494 residues: Glucose-6-phosphate exchanger SLC37A2 (494 aa).

Residues 20-37 (YRFSILFLTFVFYTSYHL) form a helical membrane-spanning segment. Residues asparagine 52, asparagine 63, and asparagine 67 are each glycosylated (N-linked (GlcNAc...) asparagine). 11 helical membrane-spanning segments follow: residues 85–105 (FGVL…FSGI), 116–136 (LSTG…GFYW), 146–166 (LVQA…VACV), 187–207 (SVGN…AWGL), 208–228 (SFIV…LFLV), 295–315 (LCLL…PLYI), 327–347 (GDLS…AGLV), 355–375 (ASTC…YNKI), 384–404 (VGML…ITTA), 427–447 (AIID…AGLI), and 455–475 (VFYM…RLVY).

The protein belongs to the major facilitator superfamily. Organophosphate:Pi antiporter (OPA) (TC 2.A.1.4) family.

The protein localises to the endoplasmic reticulum membrane. The catalysed reaction is D-glucose 6-phosphate(in) + phosphate(out) = D-glucose 6-phosphate(out) + phosphate(in). Inorganic phosphate and glucose-6-phosphate antiporter. May transport cytoplasmic glucose-6-phosphate into the lumen of the endoplasmic reticulum and translocate inorganic phosphate into the opposite direction. This chain is Glucose-6-phosphate exchanger SLC37A2, found in Danio rerio (Zebrafish).